The following is a 715-amino-acid chain: Gelsolin, cytoplasmic (715 aa).

Residues 1–124 are actin-severing; sequence MTTELEIQKA…YLIGGVASGF (124 aa). The Gelsolin-like 1 repeat unit spans residues 24–75; it reads FELVPVPKTNHGKFYTGDSYIILKTTALESGRGFEWNLHYWQGKESSQDERG. An actin-actin interfilament contact point region spans residues 72–75; the sequence is DERG. 136 to 145 is a binding site for a 1,2-diacyl-sn-glycero-3-phospho-(1D-myo-inositol-4,5-bisphosphate); that stretch reads KVLTRVKGKR. Gelsolin-like repeat units follow at residues 147-187, 260-306, and 405-451; these read VRAT…FEKN, LKIT…TERA, and LRKE…NERT. The tract at residues 384–715 is actin-binding, Ca-sensitive; that stretch reads AAESKMIDDG…FLGWDKTLWD (332 aa). Residues Gly-421, Asp-422, Glu-449, Thr-499, Asn-539, Asp-540, Glu-562, Asp-642, and Glu-665 each contribute to the Ca(2+) site. 2 Gelsolin-like repeats span residues 524-564 and 625-667; these read CRAV…SEIQ and FIAE…EEKM.

The protein belongs to the villin/gelsolin family. Predominantly in the body wall muscle, but expression is not restricted to muscle cells.

Its subcellular location is the cytoplasm. It localises to the cytoskeleton. Its function is as follows. Calcium-regulated, actin-modulating protein that binds to the plus (or barbed) ends of actin monomers or filaments, preventing monomer exchange (end-blocking or capping). It can promote the assembly of monomers into filaments (nucleation) as well as sever filaments already formed. The protein is Gelsolin, cytoplasmic of Halocynthia roretzi (Sea squirt).